The chain runs to 304 residues: Acetyl-coenzyme A carboxylase carboxyl transferase subunit beta (304 aa).

The 270-residue stretch at 23–292 (VWTKCDSCGQ…PNPDAPREGV (270 aa)) folds into the CoA carboxyltransferase N-terminal domain. Zn(2+) is bound by residues Cys-27, Cys-30, Cys-46, and Cys-49. The segment at 27-49 (CDSCGQVLYRAELERNLEVCPKC) adopts a C4-type zinc-finger fold. The tract at residues 284-304 (NPDAPREGVVVPPAPDQESEV) is disordered.

Belongs to the AccD/PCCB family. In terms of assembly, acetyl-CoA carboxylase is a heterohexamer composed of biotin carboxyl carrier protein (AccB), biotin carboxylase (AccC) and two subunits each of ACCase subunit alpha (AccA) and ACCase subunit beta (AccD). Zn(2+) serves as cofactor.

The protein resides in the cytoplasm. It carries out the reaction N(6)-carboxybiotinyl-L-lysyl-[protein] + acetyl-CoA = N(6)-biotinyl-L-lysyl-[protein] + malonyl-CoA. Its pathway is lipid metabolism; malonyl-CoA biosynthesis; malonyl-CoA from acetyl-CoA: step 1/1. Component of the acetyl coenzyme A carboxylase (ACC) complex. Biotin carboxylase (BC) catalyzes the carboxylation of biotin on its carrier protein (BCCP) and then the CO(2) group is transferred by the transcarboxylase to acetyl-CoA to form malonyl-CoA. The chain is Acetyl-coenzyme A carboxylase carboxyl transferase subunit beta from Salmonella paratyphi A (strain ATCC 9150 / SARB42).